Consider the following 482-residue polypeptide: MNIVLAASEAFPFCKTGGLADVTGSLAKELSKHKGNRVILFLPHYRNINRVASLKVVPGTFLIPIGDRLETASLSYISWGNVLVFFINNTKYFDRPELYRTAAGDYFDNDERFIFFNRAVLESCKFIGYRPDIIHAHDWQAGLLPAYLKTVYKTDAFFTRTRSLFTIHNMAYQGQYPYSTFIKTGFHTVDYVPERFEYYGGISYLKSGIVYADYVNTVSPNYAKEITLDEKMGFGMEGLLRSRQDTFCGILNGLDTGVWDPEHDPLIPYSYESFSPVKGKAACKQFLQNMLGLEVSPSKPLVGIVSRMDYQKGLDLIPGVVNKYKDKVQFVVVGTGDSGMEKAFMALAKNNVGKVAYVAKVDEELAHRVYAGSDIFLMPSRFEPCGLSQMISMRYGTVPIVSRVGGLLDTVKGYDGITKYATGFFILEFSETGIERSLDYALKYYQDKRCWGMLIKNGMEKDFSWTKSAQEYQDLYKKIISK.

K15 is a binding site for ADP-alpha-D-glucose.

The protein belongs to the glycosyltransferase 1 family. Bacterial/plant glycogen synthase subfamily.

It carries out the reaction [(1-&gt;4)-alpha-D-glucosyl](n) + ADP-alpha-D-glucose = [(1-&gt;4)-alpha-D-glucosyl](n+1) + ADP + H(+). It participates in glycan biosynthesis; glycogen biosynthesis. Functionally, synthesizes alpha-1,4-glucan chains using ADP-glucose. This is Glycogen synthase from Elusimicrobium minutum (strain Pei191).